The sequence spans 258 residues: UPF0246 protein VV1_0535 (258 aa).

The protein belongs to the UPF0246 family.

In Vibrio vulnificus (strain CMCP6), this protein is UPF0246 protein VV1_0535.